Reading from the N-terminus, the 209-residue chain is Imidazole glycerol phosphate synthase subunit HisH (209 aa).

One can recognise a Glutamine amidotransferase type-1 domain in the interval 4 to 209 (PVVVFEYGSG…RLLANWIGSL (206 aa)). The active-site Nucleophile is the Cys82. Residues His190 and Glu192 contribute to the active site.

Heterodimer of HisH and HisF.

It is found in the cytoplasm. The enzyme catalyses 5-[(5-phospho-1-deoxy-D-ribulos-1-ylimino)methylamino]-1-(5-phospho-beta-D-ribosyl)imidazole-4-carboxamide + L-glutamine = D-erythro-1-(imidazol-4-yl)glycerol 3-phosphate + 5-amino-1-(5-phospho-beta-D-ribosyl)imidazole-4-carboxamide + L-glutamate + H(+). It carries out the reaction L-glutamine + H2O = L-glutamate + NH4(+). The protein operates within amino-acid biosynthesis; L-histidine biosynthesis; L-histidine from 5-phospho-alpha-D-ribose 1-diphosphate: step 5/9. In terms of biological role, IGPS catalyzes the conversion of PRFAR and glutamine to IGP, AICAR and glutamate. The HisH subunit catalyzes the hydrolysis of glutamine to glutamate and ammonia as part of the synthesis of IGP and AICAR. The resulting ammonia molecule is channeled to the active site of HisF. In Leifsonia xyli subsp. xyli (strain CTCB07), this protein is Imidazole glycerol phosphate synthase subunit HisH.